A 190-amino-acid chain; its full sequence is Small ribosomal subunit protein eS7x (190 aa).

Methionine 1 bears the N-acetylmethionine mark. Positions 17 to 50 form a coiled coil; sequence TECEEQVAQALFDLENTNQELKSELKDLYINQAV.

It belongs to the eukaryotic ribosomal protein eS7 family.

The protein is Small ribosomal subunit protein eS7x (RPS7C) of Arabidopsis thaliana (Mouse-ear cress).